A 434-amino-acid polypeptide reads, in one-letter code: Enolase (434 aa).

Position 166 (Gln-166) interacts with (2R)-2-phosphoglycerate. Catalysis depends on Glu-208, which acts as the Proton donor. Residues Asp-245, Glu-290, and Asp-317 each coordinate Mg(2+). Residues Lys-342, Arg-371, Ser-372, and Lys-393 each coordinate (2R)-2-phosphoglycerate. Lys-342 functions as the Proton acceptor in the catalytic mechanism.

Belongs to the enolase family. Requires Mg(2+) as cofactor.

The protein resides in the cytoplasm. The protein localises to the secreted. Its subcellular location is the cell surface. The enzyme catalyses (2R)-2-phosphoglycerate = phosphoenolpyruvate + H2O. It functions in the pathway carbohydrate degradation; glycolysis; pyruvate from D-glyceraldehyde 3-phosphate: step 4/5. Its function is as follows. Catalyzes the reversible conversion of 2-phosphoglycerate (2-PG) into phosphoenolpyruvate (PEP). It is essential for the degradation of carbohydrates via glycolysis. This is Enolase from Caldicellulosiruptor bescii (strain ATCC BAA-1888 / DSM 6725 / KCTC 15123 / Z-1320) (Anaerocellum thermophilum).